The following is a 644-amino-acid chain: Threonine--tRNA ligase (644 aa).

Positions 1–61 (MPVITLPDGS…EKDTKLTIIT (61 aa)) constitute a TGS domain. Residues 242-535 (DHRRIGADLD…LIEHYEGKFP (294 aa)) form a catalytic region. 3 residues coordinate Zn(2+): Cys335, His386, and His512.

Belongs to the class-II aminoacyl-tRNA synthetase family. Homodimer. Requires Zn(2+) as cofactor.

Its subcellular location is the cytoplasm. The catalysed reaction is tRNA(Thr) + L-threonine + ATP = L-threonyl-tRNA(Thr) + AMP + diphosphate + H(+). Its function is as follows. Catalyzes the attachment of threonine to tRNA(Thr) in a two-step reaction: L-threonine is first activated by ATP to form Thr-AMP and then transferred to the acceptor end of tRNA(Thr). Also edits incorrectly charged L-seryl-tRNA(Thr). This chain is Threonine--tRNA ligase, found in Nitrosococcus oceani (strain ATCC 19707 / BCRC 17464 / JCM 30415 / NCIMB 11848 / C-107).